A 520-amino-acid chain; its full sequence is Serine/threonine-protein kinases drp72 (520 aa).

Residues 20–281 (YTLQWIVGHG…NELARAVSAV (262 aa)) form the Protein kinase domain. Residues 26-34 (VGHGGMSTV) and Lys49 contribute to the ATP site. Asp148 acts as the Proton acceptor in catalysis. 2 disordered regions span residues 315–334 (ARPTTSVPASPTVLPERQEK) and 366–504 (SGDS…DAAD). Residues 374-394 (TPETITQTVTPTETTTSEEPT) are compositionally biased toward low complexity. Positions 395 to 411 (LAPPPVQPTRQPVPTPD) are enriched in pro residues. A compositionally biased stretch (polar residues) spans 416–429 (RLPTTTQESPTRVS). Residues 440 to 449 (EQTTPGGQPP) are compositionally biased toward low complexity. Positions 450 to 460 (LSTLPTSLGWQ) are enriched in polar residues. The segment covering 469–484 (QGNPNTTGNPANPGTP) has biased composition (low complexity). Gly residues predominate over residues 485 to 496 (GTTGGNGTGNAG).

This sequence belongs to the protein kinase superfamily. Ser/Thr protein kinase family.

It carries out the reaction L-seryl-[protein] + ATP = O-phospho-L-seryl-[protein] + ADP + H(+). It catalyses the reaction L-threonyl-[protein] + ATP = O-phospho-L-threonyl-[protein] + ADP + H(+). The sequence is that of Serine/threonine-protein kinases drp72 from Corynebacterium efficiens (strain DSM 44549 / YS-314 / AJ 12310 / JCM 11189 / NBRC 100395).